The chain runs to 160 residues: Transcription elongation factor GreA (160 aa).

Residues 49–75 (SEYDEAKNDQAFTEGKILQLENKLKNA) are a coiled coil.

It belongs to the GreA/GreB family.

Necessary for efficient RNA polymerase transcription elongation past template-encoded arresting sites. The arresting sites in DNA have the property of trapping a certain fraction of elongating RNA polymerases that pass through, resulting in locked ternary complexes. Cleavage of the nascent transcript by cleavage factors such as GreA or GreB allows the resumption of elongation from the new 3'terminus. GreA releases sequences of 2 to 3 nucleotides. The protein is Transcription elongation factor GreA of Clostridium botulinum (strain Alaska E43 / Type E3).